The following is a 976-amino-acid chain: Metabotropic glutamate receptor (976 aa).

The first 25 residues, 1 to 25, serve as a signal peptide directing secretion; the sequence is MKQKNNNGTILVVVMVLSWSRVVDL. Over 26–626 the chain is Extracellular; it reads KSPSNTHTQD…IQYMKWNSLF (601 aa). Residues Asn112 and Asn143 are each glycosylated (N-linked (GlcNAc...) asparagine). L-glutamate-binding positions include Ser158 and 179–181; that span reads AST. Residue Asn216 is glycosylated (N-linked (GlcNAc...) asparagine). Tyr229 contributes to the L-glutamate binding site. The N-linked (GlcNAc...) asparagine glycan is linked to Asn299. An L-glutamate-binding site is contributed by Asp310. N-linked (GlcNAc...) asparagine glycosylation is present at Asn386. An L-glutamate-binding site is contributed by Lys417. 2 N-linked (GlcNAc...) asparagine glycosylation sites follow: Asn491 and Asn524. A helical transmembrane segment spans residues 627–649; that stretch reads ALIPMAIAIFGIALTSIVIVLFA. Residues 650–663 lie on the Cytoplasmic side of the membrane; it reads KNHDTPLVRASGRE. A helical transmembrane segment spans residues 664 to 684; it reads LSYTLLFGILVCYCNTFALIA. Topologically, residues 685-695 are extracellular; the sequence is KPTIGSCVLQR. Residues 696 to 714 form a helical membrane-spanning segment; the sequence is FGIGVGFSIIYSALLTKTN. Residues 715–738 are Cytoplasmic-facing; it reads RISRIFHSASKSAQRLKYISPQSQ. The chain crosses the membrane as a helical span at residues 739-759; it reads VVITTSLIAIQVLITMIWMVV. The Extracellular portion of the chain corresponds to 760-782; it reads EPPGTRFYYPDRREVILKCKIQD. Residues 783 to 804 form a helical membrane-spanning segment; it reads MSFLFSQLYNMILITICTIYAI. The Cytoplasmic portion of the chain corresponds to 805–817; that stretch reads KTRKIPENFNESK. The chain crosses the membrane as a helical span at residues 818–840; the sequence is FIGFTMYTTCIIWLAFVPIYFGT. Residues 841 to 850 lie on the Extracellular side of the membrane; the sequence is GNSYEVQTTT. The chain crosses the membrane as a helical span at residues 851 to 876; that stretch reads LCISISLSASVALVCLYSPKVYILVF. At 877–976 the chain is on the cytoplasmic side; that stretch reads HPDKNVRKLT…VEPICHIVNK (100 aa). The interval 920-946 is disordered; it reads LTGGAVGTNASSSTLPTQNSPHLDEAS. Polar residues predominate over residues 927–946; it reads TNASSSTLPTQNSPHLDEAS.

The protein belongs to the G-protein coupled receptor 3 family. Expressed in the neurons of the larval CNS from the beginning of the first until the third instar. Expression in the third-instar larval CNS is restricted to a discrete number of somas and projections in the brain lobes and in the ventral ganglion. In the ventral nerve cord, expression is detected both in somas and projections. Expressed in the antennal lobes, the optic lobes, the central complex and the median bundle in the adult CNS.

It localises to the cell membrane. G-protein coupled receptor for glutamate. Ligand binding causes a conformation change that triggers signaling via guanine nucleotide-binding proteins (G proteins) and modulates the activity of down-stream effectors. This chain is Metabotropic glutamate receptor (mGluR), found in Drosophila melanogaster (Fruit fly).